The following is a 1967-amino-acid chain: RQC trigger complex helicase SLH1 (1967 aa).

Positions Pro297–Met485 constitute a Helicase ATP-binding 1 domain. Ala310 to Thr317 serves as a coordination point for ATP. A DEVH box motif is present at residues Asp427–His430. A Helicase C-terminal 1 domain is found at Asn516–Gly735. An SEC63 1 domain is found at Ala795 to Phe1100. The 176-residue stretch at Tyr1149 to Tyr1324 folds into the Helicase ATP-binding 2 domain. Ser1162–Thr1169 lines the ATP pocket. Residues Asp1266 to His1269 carry the DEAH box motif. The region spanning Met1355–Leu1550 is the Helicase C-terminal 2 domain. Positions Ala1626–Trp1776 constitute an SEC63 2 domain.

It belongs to the helicase family. SKI2 subfamily. As to quaternary structure, component of the RQT (ribosome quality control trigger) complex, composed of SLH1, CUE3, and RQT4. Interacts with CUE3. Interacts with RQT4. Interacts with HEL2. Associates with translating ribosomes.

Its subcellular location is the cytoplasm. It is found in the cytosol. It carries out the reaction ATP + H2O = ADP + phosphate + H(+). Functionally, involved in activation of the ribosome quality control (RQC) pathway, a pathway that degrades nascent peptide chains during problematic translation. Drives the splitting of stalled ribosomes that are polyubiquitinated in a HEL2-dependent manner, as part of the ribosome quality control trigger (RQT) complex. Also represses the translation of non-poly(A) mRNAs together with SKI2. May block translation by inhibiting translation initiation factor 5B (FUN12) action on mRNAs lacking a 3' poly(A) structure. Involved in antiviral defense, preventing L-A dsRNA virus propagation by specifically blocking translation of viral mRNAs. In Saccharomyces cerevisiae (strain ATCC 204508 / S288c) (Baker's yeast), this protein is RQC trigger complex helicase SLH1.